Reading from the N-terminus, the 113-residue chain is uncharacterized protein (113 aa).

Residues 41–88 (DWHHHPDSDELFIVLEGELLIDFKDKETAVLKANDSLLIPKGTVHRTR) form the Cupin type-2 domain.

The protein belongs to the SchB/CurC family.

This is an uncharacterized protein from Bacillus subtilis (strain 168).